A 260-amino-acid polypeptide reads, in one-letter code: ATP synthase subunit a (260 aa).

7 consecutive transmembrane segments (helical) span residues 30 to 50 (IAFT…IVFV), 96 to 116 (LFAF…LVGV), 125 to 145 (FTVT…VGFA), 151 to 171 (FFSL…IFPI), 187 to 207 (LFVA…FVIS), 213 to 233 (VGTF…ICAL), and 234 to 254 (ELLV…VYLN).

This sequence belongs to the ATPase A chain family. As to quaternary structure, F-type ATPases have 2 components, CF(1) - the catalytic core - and CF(0) - the membrane proton channel. CF(1) has five subunits: alpha(3), beta(3), gamma(1), delta(1), epsilon(1). CF(0) has three main subunits: a(1), b(2) and c(9-12). The alpha and beta chains form an alternating ring which encloses part of the gamma chain. CF(1) is attached to CF(0) by a central stalk formed by the gamma and epsilon chains, while a peripheral stalk is formed by the delta and b chains.

It localises to the cell inner membrane. Its function is as follows. Key component of the proton channel; it plays a direct role in the translocation of protons across the membrane. This Novosphingobium aromaticivorans (strain ATCC 700278 / DSM 12444 / CCUG 56034 / CIP 105152 / NBRC 16084 / F199) protein is ATP synthase subunit a.